The following is a 700-amino-acid chain: MARTTPIERYRNIGISAHIDAGKTTTTERILFYTGVSHKIGEVHDGAATMDWMEQEQERGITITSAATTAFWSGMSQQFPQHRINVIDTPGHVDFTVEVERSMRVLDGAVMVYCAVGGVQPQSETVWRQANKYEVPRIAFVNKMDRTGANFLRVVEQLKTRLGANAVPLQLPIGAEENFTGVVDLIKMKAINWNEADQGMTFTYEEVPANMQADCEEWRQNLVEAAAEASEELMEKYLGGEDLTEEEIKSALRQRVLANEIILVTCGSAFKNKGVQAMLDAVVEYLPAPTDIPAIKGINPDETEGERHASDEEPFSSLAFKIATDPFVGNLTFFRVYSGVINSGDTVLNSVRQKRERFGRIVQMHANKREEIKEVRAGDIAAAIGLKDVTTGDTLCAIEAPIILERMEFPEPVISVAVEPKTKADQEKMGLALGRLAQEDPSFRVHTDEESGETIISGMGELHLDIIVDRMKREFKVEANIGKPQVSYRETIRTRVNDVEGKHAKQSGGRGQYGHVVIDLYPLDPEGPGYEFVNEIKGGVIPGEYIPAVDKGIQEQLKSGPLAGYPVVDLGVRLHFGSYHDVDSSELAFKLAASLAFKAAFSKANPVLLEPIMKVEVETPPEYVGDVIGDLSRRRAMVNGQEANEFVVKIDAEVPLSEMFGYATDLRSQTQGRASYSMEPLKYAEAPTSVAAAVIEARKK.

Residues 8–290 (ERYRNIGISA…AVVEYLPAPT (283 aa)) form the tr-type G domain. GTP-binding positions include 17-24 (AHIDAGKT), 88-92 (DTPGH), and 142-145 (NKMD).

It belongs to the TRAFAC class translation factor GTPase superfamily. Classic translation factor GTPase family. EF-G/EF-2 subfamily.

The protein localises to the cytoplasm. Catalyzes the GTP-dependent ribosomal translocation step during translation elongation. During this step, the ribosome changes from the pre-translocational (PRE) to the post-translocational (POST) state as the newly formed A-site-bound peptidyl-tRNA and P-site-bound deacylated tRNA move to the P and E sites, respectively. Catalyzes the coordinated movement of the two tRNA molecules, the mRNA and conformational changes in the ribosome. This Haemophilus influenzae (strain 86-028NP) protein is Elongation factor G.